Reading from the N-terminus, the 394-residue chain is Mannosyl-3-phosphoglycerate synthase (394 aa).

It belongs to the glycosyltransferase 2 family.

Its subcellular location is the cytoplasm. It carries out the reaction (2R)-3-phosphoglycerate + GDP-alpha-D-mannose = 2-O-(alpha-D-mannosyl)-3-phosphoglycerate + GDP + H(+). It participates in carbohydrate biosynthesis; 2-(alpha-D-mannosyl)-D-glycerate biosynthesis; 2-(alpha-D-mannosyl)-D-glycerate from GDP-alpha-D-mannose (MPG route): step 1/2. Its function is as follows. Transfers a mannosyl group from GDP-mannose to phosphoglycerate to form mannosyl-3-phosphoglycerate (MPG). The protein is Mannosyl-3-phosphoglycerate synthase (mngA) of Pyrococcus abyssi (strain GE5 / Orsay).